A 443-amino-acid chain; its full sequence is Methylenetetrahydrofolate--tRNA-(uracil-5-)-methyltransferase TrmFO (443 aa).

8–13 contributes to the FAD binding site; sequence GAGLAG.

It belongs to the MnmG family. TrmFO subfamily. Requires FAD as cofactor.

Its subcellular location is the cytoplasm. The catalysed reaction is uridine(54) in tRNA + (6R)-5,10-methylene-5,6,7,8-tetrahydrofolate + NADH + H(+) = 5-methyluridine(54) in tRNA + (6S)-5,6,7,8-tetrahydrofolate + NAD(+). It carries out the reaction uridine(54) in tRNA + (6R)-5,10-methylene-5,6,7,8-tetrahydrofolate + NADPH + H(+) = 5-methyluridine(54) in tRNA + (6S)-5,6,7,8-tetrahydrofolate + NADP(+). Catalyzes the folate-dependent formation of 5-methyl-uridine at position 54 (M-5-U54) in all tRNAs. In Thermus thermophilus (strain ATCC BAA-163 / DSM 7039 / HB27), this protein is Methylenetetrahydrofolate--tRNA-(uracil-5-)-methyltransferase TrmFO.